Consider the following 527-residue polypeptide: Glutamate--cysteine ligase (527 aa).

It belongs to the glutamate--cysteine ligase type 1 family. Type 1 subfamily.

The catalysed reaction is L-cysteine + L-glutamate + ATP = gamma-L-glutamyl-L-cysteine + ADP + phosphate + H(+). It functions in the pathway sulfur metabolism; glutathione biosynthesis; glutathione from L-cysteine and L-glutamate: step 1/2. The protein is Glutamate--cysteine ligase of Pseudomonas aeruginosa (strain UCBPP-PA14).